The chain runs to 339 residues: Ketol-acid reductoisomerase (NADP(+)) (339 aa).

The KARI N-terminal Rossmann domain maps to 1-182 (MRVYYDRDAD…GGGRAGIIET (182 aa)). NADP(+) is bound by residues 24-27 (YGSQ), Arg48, Ser51, Ser53, and 83-86 (DELQ). His108 is a catalytic residue. Gly134 lines the NADP(+) pocket. The KARI C-terminal knotted domain occupies 183-328 (TFREECETDL…AKLRDMMPWI (146 aa)). Residues Asp191, Glu195, Glu227, and Glu231 each coordinate Mg(2+). A substrate-binding site is contributed by Ser252.

It belongs to the ketol-acid reductoisomerase family. It depends on Mg(2+) as a cofactor.

It carries out the reaction (2R)-2,3-dihydroxy-3-methylbutanoate + NADP(+) = (2S)-2-acetolactate + NADPH + H(+). The catalysed reaction is (2R,3R)-2,3-dihydroxy-3-methylpentanoate + NADP(+) = (S)-2-ethyl-2-hydroxy-3-oxobutanoate + NADPH + H(+). It functions in the pathway amino-acid biosynthesis; L-isoleucine biosynthesis; L-isoleucine from 2-oxobutanoate: step 2/4. It participates in amino-acid biosynthesis; L-valine biosynthesis; L-valine from pyruvate: step 2/4. In terms of biological role, involved in the biosynthesis of branched-chain amino acids (BCAA). Catalyzes an alkyl-migration followed by a ketol-acid reduction of (S)-2-acetolactate (S2AL) to yield (R)-2,3-dihydroxy-isovalerate. In the isomerase reaction, S2AL is rearranged via a Mg-dependent methyl migration to produce 3-hydroxy-3-methyl-2-ketobutyrate (HMKB). In the reductase reaction, this 2-ketoacid undergoes a metal-dependent reduction by NADPH to yield (R)-2,3-dihydroxy-isovalerate. The polypeptide is Ketol-acid reductoisomerase (NADP(+)) (Nitrobacter hamburgensis (strain DSM 10229 / NCIMB 13809 / X14)).